A 446-amino-acid polypeptide reads, in one-letter code: Inward rectifier potassium channel 4 (446 aa).

Residues 1–55 (MHGHSRNGQAHVPRRKRRNRFVKKNGQCNVYFANLSNKSQRYMADIFTTCVDTRW) lie on the Cytoplasmic side of the membrane. Residues 56–80 (RYMLMIFSAAFLVSWLFFGLLFWCI) traverse the membrane as a helical segment. Topologically, residues 81–120 (AFFHGDLEPSPSGPTAGGPGGNGGGAAPTAAKPCIMHVNG) are extracellular. The interval 91 to 111 (PSGPTAGGPGGNGGGAAPTAA) is val/Gly/Ala/Pro stretch. An intramembrane region (helical; Pore-forming) is located at residues 121-132 (FLGAFLFSVETQ). The segment at residues 133–139 (TTIGYGF) is an intramembrane region (pore-forming). The Selectivity filter signature appears at 134–139 (TIGYGF). The Extracellular portion of the chain corresponds to 140–148 (RCVTEECPL). Residues 149–170 (AVIAVVVQSIVGCVIDSFMIGT) form a helical membrane-spanning segment. At 171–446 (IMAKMPRPKK…NISYRRESAI (276 aa)) the chain is on the cytoplasmic side. The PDZ-binding motif lies at 444 to 446 (SAI).

It belongs to the inward rectifier-type potassium channel (TC 1.A.2.1) family. KCNJ4 subfamily. Homomultimeric and heteromultimeric association with KCNJ2 and KCNJ12. Interacts with DLG2 and DLG4. Associates, via its PDZ-recognition domain, with a complex containing LIN7A, LIN7B, LIN7C, DLG1, CASK and APBA1. Interacts with TAX1BP3. TAX1BP3 competes with LIN7 family members for KCNJ4 binding. As to expression, detected in kidney distal convoluted tubules (at protein level). Widely expressed throughout the brain. Also found in some peripheral tissues.

It localises to the cell membrane. The protein localises to the cytoplasmic vesicle membrane. It is found in the postsynaptic cell membrane. It catalyses the reaction K(+)(in) = K(+)(out). Functionally, inward rectifier potassium channels are characterized by a greater tendency to allow potassium to flow into the cell rather than out of it. Their voltage dependence is regulated by the concentration of extracellular potassium; as external potassium is raised, the voltage range of the channel opening shifts to more positive voltages. The inward rectification is mainly due to the blockage of outward current by internal magnesium. Can be blocked by extracellular barium and cesium. The chain is Inward rectifier potassium channel 4 (Kcnj4) from Rattus norvegicus (Rat).